The chain runs to 323 residues: Aspartate carbamoyltransferase catalytic subunit (323 aa).

Arg-61 and Thr-62 together coordinate carbamoyl phosphate. Lys-89 is an L-aspartate binding site. The carbamoyl phosphate site is built by Arg-111, His-144, and Gln-147. Residues Arg-184 and Arg-238 each coordinate L-aspartate. Carbamoyl phosphate-binding residues include Gly-279 and Pro-280.

Belongs to the aspartate/ornithine carbamoyltransferase superfamily. ATCase family. As to quaternary structure, heterododecamer (2C3:3R2) of six catalytic PyrB chains organized as two trimers (C3), and six regulatory PyrI chains organized as three dimers (R2).

The enzyme catalyses carbamoyl phosphate + L-aspartate = N-carbamoyl-L-aspartate + phosphate + H(+). It functions in the pathway pyrimidine metabolism; UMP biosynthesis via de novo pathway; (S)-dihydroorotate from bicarbonate: step 2/3. Its function is as follows. Catalyzes the condensation of carbamoyl phosphate and aspartate to form carbamoyl aspartate and inorganic phosphate, the committed step in the de novo pyrimidine nucleotide biosynthesis pathway. The protein is Aspartate carbamoyltransferase catalytic subunit of Acaryochloris marina (strain MBIC 11017).